The primary structure comprises 353 residues: Photosystem II protein D1 (353 aa).

Residue T2 is modified to N-acetylthreonine. T2 carries the post-translational modification Phosphothreonine. A run of 3 helical transmembrane segments spans residues 29–46 (YIGW…TATS), 118–133 (HFFI…EWEL), and 142–156 (WIAV…AATA). H118 serves as a coordination point for chlorophyll a. Y126 contributes to the pheophytin a binding site. Residues D170 and E189 each coordinate [CaMn4O5] cluster. Residues 197 to 218 (FHMLGVAGVFGGSLFSAMHGSL) traverse the membrane as a helical segment. A chlorophyll a-binding site is contributed by H198. Residues H215 and 264–265 (SF) contribute to the a quinone site. H215 contacts Fe cation. H272 contacts Fe cation. A helical membrane pass occupies residues 274 to 288 (FLAIWPVVGIWFTAL). [CaMn4O5] cluster is bound by residues H332, E333, D342, and A344. The propeptide occupies 345–353 (SVEAPSING).

This sequence belongs to the reaction center PufL/M/PsbA/D family. In terms of assembly, PSII is composed of 1 copy each of membrane proteins PsbA, PsbB, PsbC, PsbD, PsbE, PsbF, PsbH, PsbI, PsbJ, PsbK, PsbL, PsbM, PsbT, PsbX, PsbY, PsbZ, Psb30/Ycf12, at least 3 peripheral proteins of the oxygen-evolving complex and a large number of cofactors. It forms dimeric complexes. The D1/D2 heterodimer binds P680, chlorophylls that are the primary electron donor of PSII, and subsequent electron acceptors. It shares a non-heme iron and each subunit binds pheophytin, quinone, additional chlorophylls, carotenoids and lipids. D1 provides most of the ligands for the Mn4-Ca-O5 cluster of the oxygen-evolving complex (OEC). There is also a Cl(-1) ion associated with D1 and D2, which is required for oxygen evolution. The PSII complex binds additional chlorophylls, carotenoids and specific lipids. is required as a cofactor. Post-translationally, tyr-161 forms a radical intermediate that is referred to as redox-active TyrZ, YZ or Y-Z. In terms of processing, C-terminally processed by CTPA; processing is essential to allow assembly of the oxygen-evolving complex and thus photosynthetic growth.

It is found in the plastid. It localises to the chloroplast thylakoid membrane. It catalyses the reaction 2 a plastoquinone + 4 hnu + 2 H2O = 2 a plastoquinol + O2. Functionally, photosystem II (PSII) is a light-driven water:plastoquinone oxidoreductase that uses light energy to abstract electrons from H(2)O, generating O(2) and a proton gradient subsequently used for ATP formation. It consists of a core antenna complex that captures photons, and an electron transfer chain that converts photonic excitation into a charge separation. The D1/D2 (PsbA/PsbD) reaction center heterodimer binds P680, the primary electron donor of PSII as well as several subsequent electron acceptors. The chain is Photosystem II protein D1 from Stigeoclonium helveticum (Green alga).